Consider the following 80-residue polypeptide: Cytochrome c oxidase subunit 7A1, mitochondrial (80 aa).

The N-terminal 21 residues, 1–21 (MRALRVSQALVRSFSSTARNR), are a transit peptide targeting the mitochondrion. Residues 22–46 (LENRVAEKQKIFQADNDLPVHLKGG) are Mitochondrial matrix-facing. The helical transmembrane segment at 47–75 (ATDNILYRVTMTLCLGGTVYSLYCLGWAS) threads the bilayer. Topologically, residues 76–80 (FPHKK) are mitochondrial intermembrane.

This sequence belongs to the cytochrome c oxidase VIIa family. As to quaternary structure, component of the complex IV (CIV, cytochrome c oxidase), a multisubunit enzyme composed of 14 subunits. The complex is composed of a catalytic core of 3 subunits MT-CO1, MT-CO2 and MT-CO3, encoded in the mitochondrial DNA, and 11 supernumerary subunits COX4I1 (or COX4I2), COX5A, COX5B, COX6A2 (or COX6A1), COX6B1 (or COX6B2), COX6C, COX7A1 (or COX7A2), COX7B, COX7C, COX8B and NDUFA4, which are encoded in the nuclear genome. The complex exists as a monomer or a dimer and forms supercomplexes (SCs) in the inner mitochondrial membrane with NADH-ubiquinone oxidoreductase (complex I, CI) and ubiquinol-cytochrome c oxidoreductase (cytochrome b-c1 complex, complex III, CIII), resulting in different assemblies (supercomplex SCI(1)III(2)IV(1) and megacomplex MCI(2)III(2)IV(2)).

Its subcellular location is the mitochondrion inner membrane. Its pathway is energy metabolism; oxidative phosphorylation. In terms of biological role, component of the mitochondrial respiratory complex IV (CIV, also named cytochrome c oxidase complex), the last enzyme in the mitochondrial electron transport chain which drives oxidative phosphorylation. The CIV complex is the component of the respiratory chain that catalyzes the reduction of oxygen to water. Acts as an assembly factor that specifically drives the homodimerization of CIV complexes, mediating the formation of mitochondrial respiratory supercomplexes (respirasomes) containing two CIV: supercomplxes with two molecules of CIV show improved activity. Despite being highly expressed in brown adipose tissue, not required for thermogenesis. The polypeptide is Cytochrome c oxidase subunit 7A1, mitochondrial (COX7A1) (Sus scrofa (Pig)).